We begin with the raw amino-acid sequence, 117 residues long: Immunoglobulin heavy variable 1-24 (117 aa).

The signal sequence occupies residues 1-19; that stretch reads MDCTWRILFLVAAATGTHA. The tract at residues 20-44 is framework-1; it reads QVQLVQSGAEVKKPGASVKVSCKVS. The Ig-like domain occupies 20–117; sequence QVQLVQSGAE…EDTAVYYCAT (98 aa). Residues cysteine 41 and cysteine 115 are joined by a disulfide bond. Residues 45-52 form a complementarity-determining-1 region; that stretch reads GYTLTELS. Residues 53–69 are framework-2; it reads MHWVRQAPGKGLEWMGG. The tract at residues 70-77 is complementarity-determining-2; it reads FDPEDGET. The framework-3 stretch occupies residues 78–115; that stretch reads IYAQKFQGRVTMTEDTSTDTAYMELSSLRSEDTAVYYC. Residues 116 to 117 form a complementarity-determining-3 region; the sequence is AT.

In terms of assembly, immunoglobulins are composed of two identical heavy chains and two identical light chains; disulfide-linked.

Its subcellular location is the secreted. The protein resides in the cell membrane. V region of the variable domain of immunoglobulin heavy chains that participates in the antigen recognition. Immunoglobulins, also known as antibodies, are membrane-bound or secreted glycoproteins produced by B lymphocytes. In the recognition phase of humoral immunity, the membrane-bound immunoglobulins serve as receptors which, upon binding of a specific antigen, trigger the clonal expansion and differentiation of B lymphocytes into immunoglobulins-secreting plasma cells. Secreted immunoglobulins mediate the effector phase of humoral immunity, which results in the elimination of bound antigens. The antigen binding site is formed by the variable domain of one heavy chain, together with that of its associated light chain. Thus, each immunoglobulin has two antigen binding sites with remarkable affinity for a particular antigen. The variable domains are assembled by a process called V-(D)-J rearrangement and can then be subjected to somatic hypermutations which, after exposure to antigen and selection, allow affinity maturation for a particular antigen. In Homo sapiens (Human), this protein is Immunoglobulin heavy variable 1-24.